The sequence spans 631 residues: ATP-dependent protease PrkA (631 aa).

T217 is modified (phosphothreonine). A Phosphoserine modification is found at S219.

The protein belongs to the PrkA family. Post-translationally, phosphorylated by PrkC on two sites, Thr-217 and Ser-219, with the threonine being the major site of modification.

It is found in the forespore. The protein resides in the spore coat. It carries out the reaction Hydrolysis of proteins in presence of ATP.. With respect to regulation, hydrolase activity is regulated by phosphorylation by the Ser/Thr kinase PrkC, probably allowing fine control of sporulation. Phosphorylation by PrkC does not prevent ATP fixation but it inhibits specifically PrkA protease activity and down-regulates the sporulation processes. Hydrolase activity is inhibited by a protease inhibitor, phenylmethylsulfonyl fluoride (PMSF). Potential kinase activity requires the presence of MgCl(2) and is inhibited in the presence of MnCl(2). Functionally, ATP-dependent protease that regulates sporulation. Is able to bind and hydrolyze ATP. This ATP-dependent protease activity is necessary for efficient sporulation of B.subtilis. In vitro, can hydrolyze alpha-casein, an exogenous substrate of Lon proteases, in an ATP-dependent manner. PrkA also modulates sporulation by negatively regulating the transcriptional regulator Hpr/ScoC to induce the expression of sigK. The control of sporulation mediated via the Hpr/ScoC regulator is probably indirect. PrkA was originally thought to be a protein kinase, as it has been shown to phosphorylate in vitro an unidentified 60 kDa protein from B.subtilis crude extracts at a serine residue. However, Zhang et al. did not observe autophosphorylation or kinase activity for this protein, suggesting that it may have lost its kinase activity during evolution or may be a pseudokinase. The polypeptide is ATP-dependent protease PrkA (Bacillus subtilis (strain 168)).